Reading from the N-terminus, the 171-residue chain is Der GTPase-activating protein YihI (171 aa).

Disordered stretches follow at residues 1 to 99 (MKKP…PQAE) and 145 to 171 (GLSY…KGGN). A compositionally biased stretch (basic and acidic residues) spans 20–30 (TREELNQEARD). The span at 40–59 (HSAGSRANGSSASGSTAQNS) shows a compositional bias: low complexity. Residues 148-160 (YEDDEDDEEEEKQ) are compositionally biased toward acidic residues.

Belongs to the YihI family. As to quaternary structure, interacts with Der.

A GTPase-activating protein (GAP) that modifies Der/EngA GTPase function. May play a role in ribosome biogenesis. The polypeptide is Der GTPase-activating protein YihI (Enterobacter sp. (strain 638)).